Reading from the N-terminus, the 707-residue chain is Polyribonucleotide nucleotidyltransferase (707 aa).

Residues Asp-486 and Asp-492 each coordinate Mg(2+). The region spanning 553 to 612 is the KH domain; that stretch reads PRIHKIKINPEKIKDVIGKGGSVIRMLTEETGTIIEIEDDGTIKISATIGEKAKNAIRRI. Residues 622 to 690 enclose the S1 motif domain; that stretch reads GRIYSGKVTR…RQGRLRLSIK (69 aa).

Belongs to the polyribonucleotide nucleotidyltransferase family. Component of the RNA degradosome, which is a multiprotein complex involved in RNA processing and mRNA degradation. Requires Mg(2+) as cofactor.

It is found in the cytoplasm. The catalysed reaction is RNA(n+1) + phosphate = RNA(n) + a ribonucleoside 5'-diphosphate. Involved in mRNA degradation. Catalyzes the phosphorolysis of single-stranded polyribonucleotides processively in the 3'- to 5'-direction. In Buchnera aphidicola subsp. Schizaphis graminum (strain Sg), this protein is Polyribonucleotide nucleotidyltransferase.